The following is a 346-amino-acid chain: Holliday junction branch migration complex subunit RuvB (346 aa).

The large ATPase domain (RuvB-L) stretch occupies residues 1–188 (MSDEYGPPER…FGIVQRLAYY (188 aa)). Residues Leu27, Arg28, Gly69, Lys72, Thr73, Thr74, 135 to 137 (EDF), Arg178, Tyr188, and Arg225 contribute to the ATP site. A Mg(2+)-binding site is contributed by Thr73. Positions 189-259 (PVDELTRIVQ…VAADAMELLD (71 aa)) are small ATPAse domain (RuvB-S). The head domain (RuvB-H) stretch occupies residues 262–346 (RNGLDEQDRR…QAAGSGDLFG (85 aa)). The DNA site is built by Arg298, Arg317, and Arg322.

The protein belongs to the RuvB family. Homohexamer. Forms an RuvA(8)-RuvB(12)-Holliday junction (HJ) complex. HJ DNA is sandwiched between 2 RuvA tetramers; dsDNA enters through RuvA and exits via RuvB. An RuvB hexamer assembles on each DNA strand where it exits the tetramer. Each RuvB hexamer is contacted by two RuvA subunits (via domain III) on 2 adjacent RuvB subunits; this complex drives branch migration. In the full resolvosome a probable DNA-RuvA(4)-RuvB(12)-RuvC(2) complex forms which resolves the HJ.

It is found in the cytoplasm. The enzyme catalyses ATP + H2O = ADP + phosphate + H(+). Its function is as follows. The RuvA-RuvB-RuvC complex processes Holliday junction (HJ) DNA during genetic recombination and DNA repair, while the RuvA-RuvB complex plays an important role in the rescue of blocked DNA replication forks via replication fork reversal (RFR). RuvA specifically binds to HJ cruciform DNA, conferring on it an open structure. The RuvB hexamer acts as an ATP-dependent pump, pulling dsDNA into and through the RuvAB complex. RuvB forms 2 homohexamers on either side of HJ DNA bound by 1 or 2 RuvA tetramers; 4 subunits per hexamer contact DNA at a time. Coordinated motions by a converter formed by DNA-disengaged RuvB subunits stimulates ATP hydrolysis and nucleotide exchange. Immobilization of the converter enables RuvB to convert the ATP-contained energy into a lever motion, pulling 2 nucleotides of DNA out of the RuvA tetramer per ATP hydrolyzed, thus driving DNA branch migration. The RuvB motors rotate together with the DNA substrate, which together with the progressing nucleotide cycle form the mechanistic basis for DNA recombination by continuous HJ branch migration. Branch migration allows RuvC to scan DNA until it finds its consensus sequence, where it cleaves and resolves cruciform DNA. This chain is Holliday junction branch migration complex subunit RuvB, found in Halorhodospira halophila (strain DSM 244 / SL1) (Ectothiorhodospira halophila (strain DSM 244 / SL1)).